The primary structure comprises 270 residues: ATP synthase subunit a (270 aa).

The next 7 helical transmembrane spans lie at 29 to 49 (VDTF…FAMV), 87 to 107 (IAPL…MDLF), 108 to 128 (PVDL…GLEP), 140 to 160 (DVNA…GFSI), 182 to 202 (PVGA…ELAA), 220 to 240 (LIFI…GAPW), and 241 to 261 (AIFH…LTIV).

The protein belongs to the ATPase A chain family. In terms of assembly, F-type ATPases have 2 components, CF(1) - the catalytic core - and CF(0) - the membrane proton channel. CF(1) has five subunits: alpha(3), beta(3), gamma(1), delta(1), epsilon(1). CF(0) has three main subunits: a(1), b(2) and c(9-12). The alpha and beta chains form an alternating ring which encloses part of the gamma chain. CF(1) is attached to CF(0) by a central stalk formed by the gamma and epsilon chains, while a peripheral stalk is formed by the delta and b chains.

The protein resides in the cell inner membrane. In terms of biological role, key component of the proton channel; it plays a direct role in the translocation of protons across the membrane. The protein is ATP synthase subunit a of Chromobacterium violaceum (strain ATCC 12472 / DSM 30191 / JCM 1249 / CCUG 213 / NBRC 12614 / NCIMB 9131 / NCTC 9757 / MK).